Reading from the N-terminus, the 713-residue chain is TWiK family of potassium channels protein 12 (713 aa).

Residues 1-15 (MTLFKKIQWFCNLIR) are Cytoplasmic-facing. The chain crosses the membrane as a helical span at residues 16–36 (LRSYYKFLLLIAYTAFGAWLF). Residues N53, N77, and N98 are each glycosylated (N-linked (GlcNAc...) asparagine). An intramembrane region (pore-forming) is located at residues 112–132 (WTWTGAMFYAGQLYTTIGYGY). The chain crosses the membrane as a helical span at residues 142–162 (ICTIFYALFGIPCFLMYLKIE). The Cytoplasmic portion of the chain corresponds to 163–242 (NAIEWKKDKQ…AEERKKKPFP (80 aa)). A helical transmembrane segment spans residues 243-263 (IPIAIIMLIIWICFSASMFCI). The segment at residues 267–287 (TWVFSSAVYFFIVSISTVGLG) is an intramembrane region (pore-forming). The chain crosses the membrane as a helical span at residues 298 to 318 (VFNFLLILVGLALLSMCFELI). At 319-713 (TDRVAKWKQK…LSKRDASTMA (395 aa)) the chain is on the cytoplasmic side.

Belongs to the two pore domain potassium channel (TC 1.A.1.8) family.

The protein resides in the membrane. In Caenorhabditis elegans, this protein is TWiK family of potassium channels protein 12 (twk-12).